Reading from the N-terminus, the 102-residue chain is Protamine-2 (102 aa).

Positions 1–102 (MVRCRVRSPS…RTRRRTCRRH (102 aa)) are disordered. Serine 8, serine 10, and serine 37 each carry phosphoserine. Over residues 8–17 (SPSERSHEVY) the composition is skewed to basic and acidic residues. The segment covering 39-48 (EHVEVYERTH) has biased composition (basic and acidic residues). The segment covering 49 to 102 (GHSHYRRRHCSRRRLRRIHRQQHRSCRRRKRRSCRHRRRHRKGCRTRRRTCRRH) has biased composition (basic residues).

This sequence belongs to the protamine P2 family. As to quaternary structure, interacts with TDRP. In terms of processing, proteolytic processing into mature chains is required for histone eviction during spermatogenesis. Transition proteins (TNP1 and TNP2) are required for processing. As to expression, testis.

It localises to the nucleus. Its subcellular location is the chromosome. Functionally, protamines substitute for histones in the chromatin of sperm during the haploid phase of spermatogenesis. They compact sperm DNA into a highly condensed, stable and inactive complex. This is Protamine-2 (PRM2) from Gorilla gorilla gorilla (Western lowland gorilla).